The following is a 265-amino-acid chain: ClpXP adapter protein SpxH (265 aa).

This sequence belongs to the SpxH family. As to quaternary structure, interacts with Spx.

Its subcellular location is the cytoplasm. Adapter protein required for efficient degradation of Spx by ClpXP under non-stress conditions. Interaction with Spx stabilizes Spx and exposes the C-terminus of Spx for recognition and proteolysis by ClpXP. The sequence is that of ClpXP adapter protein SpxH from Staphylococcus haemolyticus (strain JCSC1435).